The sequence spans 345 residues: Holliday junction branch migration complex subunit RuvB (345 aa).

A large ATPase domain (RuvB-L) region spans residues 1–186 (MSTDPDEREV…FGFTAHMDFY (186 aa)). Residues leucine 25, arginine 26, glycine 67, lysine 70, threonine 71, serine 72, 133–135 (EDF), arginine 176, tyrosine 186, and arginine 223 contribute to the ATP site. Residue threonine 71 coordinates Mg(2+). Residues 187 to 257 (EPAELERVLV…VAKAALAVYD (71 aa)) form a small ATPAse domain (RuvB-S) region. The interval 260–345 (ELGLDRLDRA…AGANQPGLFE (86 aa)) is head domain (RuvB-H). DNA contacts are provided by arginine 315 and arginine 320.

It belongs to the RuvB family. In terms of assembly, homohexamer. Forms an RuvA(8)-RuvB(12)-Holliday junction (HJ) complex. HJ DNA is sandwiched between 2 RuvA tetramers; dsDNA enters through RuvA and exits via RuvB. An RuvB hexamer assembles on each DNA strand where it exits the tetramer. Each RuvB hexamer is contacted by two RuvA subunits (via domain III) on 2 adjacent RuvB subunits; this complex drives branch migration. In the full resolvosome a probable DNA-RuvA(4)-RuvB(12)-RuvC(2) complex forms which resolves the HJ.

The protein localises to the cytoplasm. It catalyses the reaction ATP + H2O = ADP + phosphate + H(+). In terms of biological role, the RuvA-RuvB-RuvC complex processes Holliday junction (HJ) DNA during genetic recombination and DNA repair, while the RuvA-RuvB complex plays an important role in the rescue of blocked DNA replication forks via replication fork reversal (RFR). RuvA specifically binds to HJ cruciform DNA, conferring on it an open structure. The RuvB hexamer acts as an ATP-dependent pump, pulling dsDNA into and through the RuvAB complex. RuvB forms 2 homohexamers on either side of HJ DNA bound by 1 or 2 RuvA tetramers; 4 subunits per hexamer contact DNA at a time. Coordinated motions by a converter formed by DNA-disengaged RuvB subunits stimulates ATP hydrolysis and nucleotide exchange. Immobilization of the converter enables RuvB to convert the ATP-contained energy into a lever motion, pulling 2 nucleotides of DNA out of the RuvA tetramer per ATP hydrolyzed, thus driving DNA branch migration. The RuvB motors rotate together with the DNA substrate, which together with the progressing nucleotide cycle form the mechanistic basis for DNA recombination by continuous HJ branch migration. Branch migration allows RuvC to scan DNA until it finds its consensus sequence, where it cleaves and resolves cruciform DNA. The chain is Holliday junction branch migration complex subunit RuvB from Mycobacterium marinum (strain ATCC BAA-535 / M).